We begin with the raw amino-acid sequence, 461 residues long: Bifunctional protein GlmU (461 aa).

Residues 1–232 are pyrophosphorylase; sequence MNLQIIILAA…SFEVQGINNR (232 aa). Residues 8–11, Lys22, Gln73, and 78–79 contribute to the UDP-N-acetyl-alpha-D-glucosamine site; these read LAAG and GT. Asp102 contributes to the Mg(2+) binding site. UDP-N-acetyl-alpha-D-glucosamine-binding residues include Gly142, Glu157, and Asn230. Asn230 contributes to the Mg(2+) binding site. The interval 233 to 253 is linker; the sequence is QQLQQLERIWQQRAANQLMEK. The N-acetyltransferase stretch occupies residues 254-461; the sequence is GATLADANRF…WKRPVKRERD (208 aa). Arg336 and Lys354 together coordinate UDP-N-acetyl-alpha-D-glucosamine. His366 serves as the catalytic Proton acceptor. UDP-N-acetyl-alpha-D-glucosamine-binding residues include Tyr369 and Asn380. Acetyl-CoA contacts are provided by residues Ala383, 389-390, Ser408, and Ala426; that span reads NY.

It in the N-terminal section; belongs to the N-acetylglucosamine-1-phosphate uridyltransferase family. This sequence in the C-terminal section; belongs to the transferase hexapeptide repeat family. In terms of assembly, homotrimer. Requires Mg(2+) as cofactor.

It localises to the cytoplasm. The enzyme catalyses alpha-D-glucosamine 1-phosphate + acetyl-CoA = N-acetyl-alpha-D-glucosamine 1-phosphate + CoA + H(+). The catalysed reaction is N-acetyl-alpha-D-glucosamine 1-phosphate + UTP + H(+) = UDP-N-acetyl-alpha-D-glucosamine + diphosphate. It participates in nucleotide-sugar biosynthesis; UDP-N-acetyl-alpha-D-glucosamine biosynthesis; N-acetyl-alpha-D-glucosamine 1-phosphate from alpha-D-glucosamine 6-phosphate (route II): step 2/2. Its pathway is nucleotide-sugar biosynthesis; UDP-N-acetyl-alpha-D-glucosamine biosynthesis; UDP-N-acetyl-alpha-D-glucosamine from N-acetyl-alpha-D-glucosamine 1-phosphate: step 1/1. It functions in the pathway bacterial outer membrane biogenesis; LPS lipid A biosynthesis. Catalyzes the last two sequential reactions in the de novo biosynthetic pathway for UDP-N-acetylglucosamine (UDP-GlcNAc). The C-terminal domain catalyzes the transfer of acetyl group from acetyl coenzyme A to glucosamine-1-phosphate (GlcN-1-P) to produce N-acetylglucosamine-1-phosphate (GlcNAc-1-P), which is converted into UDP-GlcNAc by the transfer of uridine 5-monophosphate (from uridine 5-triphosphate), a reaction catalyzed by the N-terminal domain. The polypeptide is Bifunctional protein GlmU (Legionella pneumophila (strain Corby)).